Reading from the N-terminus, the 372-residue chain is Tetraacyldisaccharide 4'-kinase (372 aa).

60–67 is a binding site for ATP; it reads TVGGSGKT.

It belongs to the LpxK family.

It catalyses the reaction a lipid A disaccharide + ATP = a lipid IVA + ADP + H(+). Its pathway is glycolipid biosynthesis; lipid IV(A) biosynthesis; lipid IV(A) from (3R)-3-hydroxytetradecanoyl-[acyl-carrier-protein] and UDP-N-acetyl-alpha-D-glucosamine: step 6/6. Its function is as follows. Transfers the gamma-phosphate of ATP to the 4'-position of a tetraacyldisaccharide 1-phosphate intermediate (termed DS-1-P) to form tetraacyldisaccharide 1,4'-bis-phosphate (lipid IVA). This chain is Tetraacyldisaccharide 4'-kinase, found in Psychrobacter cryohalolentis (strain ATCC BAA-1226 / DSM 17306 / VKM B-2378 / K5).